The following is a 616-amino-acid chain: D-glucuronyl C5-epimerase (616 aa).

Residues 1 to 12 lie on the Cytoplasmic side of the membrane; that stretch reads MKCLRWRSNRHR. A helical; Signal-anchor for type II membrane protein transmembrane segment spans residues 13 to 29; sequence IYLLVACGALFLLNRHL. At 30-616 the chain is on the extracellular side; that stretch reads TQEESRIDEE…YAYGKRAKHN (587 aa). Substrate-binding positions include Y136, 141–143, and Q169; that span reads RDR. 4 N-linked (GlcNAc...) asparagine glycosylation sites follow: N188, N232, N267, and N471. Substrate is bound by residues Y504, R562, and 574 to 580; that span reads RWDYHAV.

This sequence belongs to the D-glucuronyl C5-epimerase family. Homodimer. As to expression, expression in comma stage embryos is strong in the hypodermis and intestine and weaker in the head region. In late embryos, larval, and adult stages, expressed primarily in hypodermis and intestine.

Its subcellular location is the cell membrane. It is found in the secreted. The protein localises to the extracellular space. It localises to the extracellular matrix. The protein resides in the basement membrane. It carries out the reaction [heparosan-N-sulfate](n) = [heparan-N-sulfate](n). It participates in glycan metabolism; heparan sulfate biosynthesis. The protein operates within glycan metabolism; heparin biosynthesis. Functionally, converts D-glucuronic acid residues adjacent to N-sulfate sugar residues to L-iduronic acids. Plays a role in the early migration of AQR and PQR neurons, which descend from the Q neuroblasts. The polypeptide is D-glucuronyl C5-epimerase (hse-5) (Caenorhabditis elegans).